A 297-amino-acid polypeptide reads, in one-letter code: HTH-type transcriptional regulator ArgP (297 aa).

One can recognise an HTH lysR-type domain in the interval 4–60 (PDYRTLQALDAVIRERGFERAAQKLCITQSAVSQRIKQLENMFGQPLLVRTVPPRPT). The segment at residues 21-40 (FERAAQKLCITQSAVSQRIK) is a DNA-binding region (H-T-H motif).

Belongs to the LysR transcriptional regulatory family. In terms of assembly, homodimer.

Functionally, controls the transcription of genes involved in arginine and lysine metabolism. The chain is HTH-type transcriptional regulator ArgP from Enterobacter sp. (strain 638).